The sequence spans 177 residues: Large ribosomal subunit protein uL6 (177 aa).

It belongs to the universal ribosomal protein uL6 family. In terms of assembly, part of the 50S ribosomal subunit.

This protein binds to the 23S rRNA, and is important in its secondary structure. It is located near the subunit interface in the base of the L7/L12 stalk, and near the tRNA binding site of the peptidyltransferase center. This is Large ribosomal subunit protein uL6 from Azoarcus sp. (strain BH72).